Here is a 911-residue protein sequence, read N- to C-terminus: MTEGKSIINANLTPLPDKVGVDGLEDKWRTVWDEDGTYKFRNTRDRKAVYSIDTPPPTVSGSLHVGHVFSYTHTDVIARYKRMRGYDVFYPMGWDDNGLPTERRVQNYYGVRVDVSLPYDPDFKPPFEGTDGKKIDAKDQVPISRKNFIELCERLTAQDEKLFEALWRKLGLSIDWSQTYHTIGQHPQRVAQKAFLRNLARGEAYQQDAPGLWDVTFQTAVAQAELESREYPGFYHKVAFRFEDGTPIYIETTRPELLAACTSLIANPNDERYKQYFGQYVYSPLFKVKVPILAHPAAEMDKGAGIAMCCTFGDVTDVEWWRDLKLPTRPIIQRNGRIVMDTPDWIEDPAGREVFAETAGKTTFSARKIIVDKLRESGDLDGEPTPTKRMTNFYEKGDKPLEIVTSRQWYLKNGGTDAKLNAELIERGKELEFHPDFMRVRYENWVHGLNGDWLISRQRFFGVPFPLWYPVNASGEPDYDHPITPSEDRLPIDPTIDVPEGYDESQRDVPGGFTAEKDIMDTWATSSLTPQIVTHWAEPDEASKALFASTFPMDLRPQGQDIIRTWLFSTVDRAHLENKCLPWAHATLSGWILDPDHKKMSKSKGNVVVPNEPIEKFGADAVRYWAAAARLGLDATYDIGQMKIGRRLAIKLLNATKFALAIGREDENHHVGAAAEAAWNPADVTEPLDRAAMAKLALVVRQATEALESYEHSKALEVIESYFWQFCDDYIELVKNRAYGTPDEHGNVPSEKAVKSARTALGLGLDAFARLLAPYLPYATEEVWSWMHAGSGSVHRAAWPVVDPYVEAATGASPELLTWAGKAVEQLRKIKSEAKVSMKTPILSVALSAASEGVEAIHAALGDIAQAGRVVGKFDLVAKHAEESAAEGTPETEVAVEASELGEPPAKKPKH.

A 'HIGH' region motif is present at residues 57–67 (PTVSGSLHVGH). The 'KMSKS' region motif lies at 599–603 (KMSKS). Lys-602 lines the ATP pocket. The disordered stretch occupies residues 882 to 911 (EESAAEGTPETEVAVEASELGEPPAKKPKH).

Belongs to the class-I aminoacyl-tRNA synthetase family. ValS type 2 subfamily. In terms of assembly, monomer.

The protein localises to the cytoplasm. It catalyses the reaction tRNA(Val) + L-valine + ATP = L-valyl-tRNA(Val) + AMP + diphosphate. In terms of biological role, catalyzes the attachment of valine to tRNA(Val). As ValRS can inadvertently accommodate and process structurally similar amino acids such as threonine, to avoid such errors, it has a 'posttransfer' editing activity that hydrolyzes mischarged Thr-tRNA(Val) in a tRNA-dependent manner. The polypeptide is Valine--tRNA ligase (Bifidobacterium longum (strain NCC 2705)).